Reading from the N-terminus, the 292-residue chain is Porphobilinogen deaminase (292 aa).

Position 236 is an S-(dipyrrolylmethanemethyl)cysteine (C236).

It belongs to the HMBS family. As to quaternary structure, monomer. Dipyrromethane is required as a cofactor.

The enzyme catalyses 4 porphobilinogen + H2O = hydroxymethylbilane + 4 NH4(+). It functions in the pathway porphyrin-containing compound metabolism; protoporphyrin-IX biosynthesis; coproporphyrinogen-III from 5-aminolevulinate: step 2/4. Functionally, tetrapolymerization of the monopyrrole PBG into the hydroxymethylbilane pre-uroporphyrinogen in several discrete steps. In Wolbachia sp. subsp. Drosophila simulans (strain wRi), this protein is Porphobilinogen deaminase.